Here is a 124-residue protein sequence, read N- to C-terminus: MATINQLVRKPRKDKMKKSNVPALEACPQRRGVCTRVYTTTPKKPNSALRKVARVRLTNGYEVSSYIGGEGHNLQEHSVILIRGGRVKDLPGVRYHTVRGSLDCAGVDGRKQGRSKYGAKRPKG.

The residue at position 89 (Asp89) is a 3-methylthioaspartic acid.

The protein belongs to the universal ribosomal protein uS12 family. As to quaternary structure, part of the 30S ribosomal subunit. Contacts proteins S8 and S17. May interact with IF1 in the 30S initiation complex.

With S4 and S5 plays an important role in translational accuracy. Functionally, interacts with and stabilizes bases of the 16S rRNA that are involved in tRNA selection in the A site and with the mRNA backbone. Located at the interface of the 30S and 50S subunits, it traverses the body of the 30S subunit contacting proteins on the other side and probably holding the rRNA structure together. The combined cluster of proteins S8, S12 and S17 appears to hold together the shoulder and platform of the 30S subunit. In Hydrogenovibrio crunogenus (strain DSM 25203 / XCL-2) (Thiomicrospira crunogena), this protein is Small ribosomal subunit protein uS12.